The primary structure comprises 213 residues: 3-isopropylmalate dehydratase small subunit (213 aa).

It belongs to the LeuD family. LeuD type 1 subfamily. As to quaternary structure, heterodimer of LeuC and LeuD.

The enzyme catalyses (2R,3S)-3-isopropylmalate = (2S)-2-isopropylmalate. Its pathway is amino-acid biosynthesis; L-leucine biosynthesis; L-leucine from 3-methyl-2-oxobutanoate: step 2/4. Functionally, catalyzes the isomerization between 2-isopropylmalate and 3-isopropylmalate, via the formation of 2-isopropylmaleate. The polypeptide is 3-isopropylmalate dehydratase small subunit (Pseudomonas syringae pv. tomato (strain ATCC BAA-871 / DC3000)).